The primary structure comprises 187 residues: MNDSLIRIKQNFIEYILFNYRFKSRITVWVLNYLKANQDKLNNVHFVNSKINNHYTLEIAEVDATASAIQLSKDNKSYINTNQIFNYIANHTLRLDIQIHFANCHIRESRLDDLILMQLIHSPSYSSYVQDLYSISMDKRKQTFIIQTLQNNIDLSLQMNEPDYFYQLTQILNVLKSKDIQSTLHER.

Belongs to the UPF0302 family.

This Staphylococcus epidermidis (strain ATCC 35984 / DSM 28319 / BCRC 17069 / CCUG 31568 / BM 3577 / RP62A) protein is UPF0302 protein SERP1032.